Reading from the N-terminus, the 213-residue chain is Redox-sensing transcriptional repressor Rex (213 aa).

The H-T-H motif DNA-binding region spans 18-57 (LYYRIFKRFHAEKIERANSKQIAEAIGIDSATVRRDFSYF). An NAD(+)-binding site is contributed by 92–97 (GIGNMG).

It belongs to the transcriptional regulatory Rex family. In terms of assembly, homodimer.

It localises to the cytoplasm. Modulates transcription in response to changes in cellular NADH/NAD(+) redox state. Binds to the promoter of the aldehyde-alcohol dehydrogenase adhE gene. Functions as a redox-dependent repressor of adhE expression. The chain is Redox-sensing transcriptional repressor Rex from Streptococcus pneumoniae (strain ATCC BAA-255 / R6).